A 445-amino-acid polypeptide reads, in one-letter code: SVP1-like protein 2 (445 aa).

WD repeat units lie at residues 218–258 (AHKA…LLKE) and 263–302 (LDRAEIYDMCFSPLGTRLAVVSDKQTLHVFQIAPMAEGTL). Positions 301–321 (TLNPANPEDHQSSGSNGHIKA) are disordered. Residues 312–321 (SSGSNGHIKA) show a composition bias toward polar residues.

Belongs to the WD repeat PROPPIN family.

It is found in the vacuole membrane. It localises to the cytoplasmic vesicle membrane. Its function is as follows. Involved in mitochondrial or peroxisomal functions and amino acid signaling pathways. The chain is SVP1-like protein 2 (HSV2) from Candida glabrata (strain ATCC 2001 / BCRC 20586 / JCM 3761 / NBRC 0622 / NRRL Y-65 / CBS 138) (Yeast).